The chain runs to 424 residues: CinA-like protein (424 aa).

The protein belongs to the CinA family.

The polypeptide is CinA-like protein (Shewanella sediminis (strain HAW-EB3)).